An 813-amino-acid chain; its full sequence is Ankyrin repeat domain-containing protein SOWAHB (813 aa).

Disordered regions lie at residues 142-256 (SAAP…QSLS) and 400-436 (ETCGSEESDSGEGGDCDTEPRDNDDADDDTFSSDSHK). The segment covering 158 to 176 (MSEKARVNPSHWDTKRYYP) has biased composition (basic and acidic residues). Residues 177-189 (EDPPVPDSLPVSP) show a composition bias toward pro residues. The span at 191–202 (CTNTRQSSFTST) shows a compositional bias: polar residues. Positions 208 to 244 (HSLSSNNLSSSFSSPESPGLVAKPYNASPSPAGSSPN) are enriched in low complexity. A compositionally biased stretch (polar residues) spans 245-256 (IREQTPKSQSLS). Residues 400-416 (ETCGSEESDSGEGGDCD) are compositionally biased toward acidic residues. ANK repeat units follow at residues 657–686 (TGYTALHWFAKHGCIDLFNKVVIGAKKAGI) and 696–726 (NGYTPLHIAAIHGHHKVAIMLVEKLKVNVKV).

This sequence belongs to the SOWAH family.

The chain is Ankyrin repeat domain-containing protein SOWAHB (sowahb) from Xenopus laevis (African clawed frog).